Reading from the N-terminus, the 406-residue chain is Serine hydroxymethyltransferase (406 aa).

(6S)-5,6,7,8-tetrahydrofolate is bound by residues Leu111 and 115-117 (GHL). The residue at position 220 (Lys220) is an N6-(pyridoxal phosphate)lysine. A (6S)-5,6,7,8-tetrahydrofolate-binding site is contributed by 340–342 (SAF).

It belongs to the SHMT family. In terms of assembly, homodimer. It depends on pyridoxal 5'-phosphate as a cofactor.

It localises to the cytoplasm. The enzyme catalyses (6R)-5,10-methylene-5,6,7,8-tetrahydrofolate + glycine + H2O = (6S)-5,6,7,8-tetrahydrofolate + L-serine. It functions in the pathway one-carbon metabolism; tetrahydrofolate interconversion. The protein operates within amino-acid biosynthesis; glycine biosynthesis; glycine from L-serine: step 1/1. Catalyzes the reversible interconversion of serine and glycine with tetrahydrofolate (THF) serving as the one-carbon carrier. This reaction serves as the major source of one-carbon groups required for the biosynthesis of purines, thymidylate, methionine, and other important biomolecules. Also exhibits THF-independent aldolase activity toward beta-hydroxyamino acids, producing glycine and aldehydes, via a retro-aldol mechanism. This is Serine hydroxymethyltransferase from Mycoplasma genitalium (strain ATCC 33530 / DSM 19775 / NCTC 10195 / G37) (Mycoplasmoides genitalium).